Here is a 126-residue protein sequence, read N- to C-terminus: Holo-[acyl-carrier-protein] synthase (126 aa).

Mg(2+)-binding residues include aspartate 8 and glutamate 59.

This sequence belongs to the P-Pant transferase superfamily. AcpS family. It depends on Mg(2+) as a cofactor.

The protein resides in the cytoplasm. It carries out the reaction apo-[ACP] + CoA = holo-[ACP] + adenosine 3',5'-bisphosphate + H(+). Its function is as follows. Transfers the 4'-phosphopantetheine moiety from coenzyme A to a Ser of acyl-carrier-protein. This chain is Holo-[acyl-carrier-protein] synthase, found in Rickettsia prowazekii (strain Madrid E).